A 599-amino-acid chain; its full sequence is MATMVLPREEKLSQDEIVLGTKAVIQGLETLRGEHRALLAPLASHEAGEAEPGSQERCLLLRRSLEAIELGLGEAQVILALSSHLGAVESEKQKLRAQVRRLVQENQWLREELAGTQQKLQRSEQAVAQLEEEKQHLLFMSQIRKLDEMLPQEEKGDVPKDSLDDLFPNEDEQSPAPSPGGGDVAAQHGGYEIPARLRTLHNLVIQYASQGRYEVAVPLCKQALEDLEKTSGHDHPDVATMLNILALVYRDQNKYKDAAHLLNDALAIREKTLGKDHPAVAATLNNLAVLYGKRGKYKEAEPLCKRALEIREKVLGKFHPDVAKQLSNLALLCQNQGKAEEVEYYYRRALEIYATRLGPDDPNVAKTKNNLASCYLKQGKYQDAETLYKEILTRAHEKEFGSVNGENKPIWMHAEEREESKDKRRDRRPMEYGSWYKACKVDSPTVNTTLRTLGALYRPEGKLEAAHTLEDCASRSRKQGLDPASQTKVVELLKDGSGRGHRRGSRDVAGPQSESDLEESGPAAEWSGDGSGSLRRSGSFGKLRDALRRSSEMLVRKLQGGGPQEPNSRMKRASSLNFLNKSVEEPVQPGGRVFLTAAL.

A coiled-coil region spans residues Ile-78 to Ile-143. Basic and acidic residues predominate over residues Glu-154–Leu-163. Positions Glu-154–His-188 are disordered. Phosphoserine occurs at positions 174 and 178. TPR repeat units follow at residues Leu-197–Thr-230, Ala-239–Thr-272, Ala-281–Val-314, Ala-323–Arg-356, and Ala-365–Lys-398. At Ser-443 the chain carries Phosphoserine. One copy of the TPR 6 repeat lies at Asn-447–Gly-480. The tract at residues Leu-492 to Gly-541 is disordered. Residues Ser-505 and Ser-515 each carry the phosphoserine modification. Positions Gly-532 to Gly-541 are enriched in low complexity. Phosphoserine is present on residues Ser-574, Ser-575, and Ser-582.

This sequence belongs to the kinesin light chain family. In terms of assembly, oligomeric complex composed of two heavy chains and two light chains. Interacts (via TPR repeats) with PLEKHM2.

The protein resides in the cytoplasm. It is found in the cytoskeleton. Its subcellular location is the lysosome membrane. In terms of biological role, kinesin is a microtubule-associated force-producing protein that plays a role in organelle transport. The light chain functions in coupling of cargo to the heavy chain or in the modulation of its ATPase activity. Through binding with PLEKHM2 and ARL8B, recruits kinesin-1 to lysosomes and hence direct lysosomes movement toward microtubule plus ends. The polypeptide is Kinesin light chain 2 (Mus musculus (Mouse)).